The primary structure comprises 73 residues: DNA-directed RNA polymerase subunit omega (73 aa).

It belongs to the RNA polymerase subunit omega family. The RNAP catalytic core consists of 2 alpha, 1 beta, 1 beta' and 1 omega subunit. When a sigma factor is associated with the core the holoenzyme is formed, which can initiate transcription.

The catalysed reaction is RNA(n) + a ribonucleoside 5'-triphosphate = RNA(n+1) + diphosphate. Promotes RNA polymerase assembly. Latches the N- and C-terminal regions of the beta' subunit thereby facilitating its interaction with the beta and alpha subunits. The protein is DNA-directed RNA polymerase subunit omega of Clostridium novyi (strain NT).